A 469-amino-acid chain; its full sequence is MNPNQKIITIGSVSLTIATICFLMQIAILVTTVTLHFKQYECSSPPNNQVIPCQPTIIERNITEIVYLTNTTIEKEICPKLVEYRNWSKPQCKITGFAPFSKDNSIRLSAGGDIWVTREPYVSCDPGKCYQFALGQGTTLNNRHSNDTVHDRTPYRTLLMNELGVPFHLGTKQVCIAWSSSSCHDGKAWLHVCVTGHDENATASFIYDGRLVDSIGSWSKNILRTQESECVCINGTCTVVMTDGSASERADTKILFIEEGKVVHISPLSGSAQHVEECSCYPRYPGVRCVCRDNWKGSNRPIVDINVKDYSIVSSYVCSGLVGDTPRKNDSSSSSYCQNPNNEKGSHGVKGWAFDDGNDVWMGRTISEELRSGYETFKVIGGWSTPNSKLQINRQVIVDSGNRSGYSGIFSVEGKSCINRCFYVELIRGRKQETKVWWTSNSIVVFCGTSGTYGTGSWPDGADINLMPI.

Residues Met-1–Thr-9 are Intravirion-facing. Residues Ile-10–Val-30 traverse the membrane as a helical segment. Residues Gly-11 to Val-33 form an involved in apical transport and lipid raft association region. Topologically, residues Thr-31 to Ile-469 are virion surface. Positions His-36 to Ser-88 are hypervariable stalk region. N-linked (GlcNAc...) asparagine; by host glycans are attached at residues Asn-61, Asn-70, and Asn-86. The interval Gln-91–Ile-469 is head of neuraminidase. 8 disulfides stabilise this stretch: Cys-92/Cys-417, Cys-124/Cys-129, Cys-183/Cys-230, Cys-232/Cys-237, Cys-278/Cys-291, Cys-280/Cys-289, Cys-318/Cys-337, and Cys-421/Cys-447. Arg-118 serves as a coordination point for substrate. Asn-146 is a glycosylation site (N-linked (GlcNAc...) asparagine; by host). The active-site Proton donor/acceptor is the Asp-151. A substrate-binding site is contributed by Arg-152. 2 N-linked (GlcNAc...) asparagine; by host glycosylation sites follow: Asn-200 and Asn-234. Glu-276–Glu-277 serves as a coordination point for substrate. Residue Arg-292 participates in substrate binding. Ca(2+) is bound by residues Asp-293, Gly-297, and Asp-324. The interval Pro-326–Lys-350 is disordered. An N-linked (GlcNAc...) asparagine; by host glycan is attached at Asn-329. The span at Ser-331–Glu-343 shows a compositional bias: polar residues. Arg-371 serves as a coordination point for substrate. Asn-402 carries N-linked (GlcNAc...) asparagine; by host glycosylation. The Nucleophile role is filled by Tyr-406.

The protein belongs to the glycosyl hydrolase 34 family. Homotetramer. The cofactor is Ca(2+). Post-translationally, N-glycosylated.

Its subcellular location is the virion membrane. The protein resides in the host apical cell membrane. The enzyme catalyses Hydrolysis of alpha-(2-&gt;3)-, alpha-(2-&gt;6)-, alpha-(2-&gt;8)- glycosidic linkages of terminal sialic acid residues in oligosaccharides, glycoproteins, glycolipids, colominic acid and synthetic substrates.. Inhibited by the neuraminidase inhibitors zanamivir (Relenza) and oseltamivir (Tamiflu). These drugs interfere with the release of progeny virus from infected cells and are effective against all influenza strains. Resistance to neuraminidase inhibitors is quite rare. In terms of biological role, catalyzes the removal of terminal sialic acid residues from viral and cellular glycoconjugates. Cleaves off the terminal sialic acids on the glycosylated HA during virus budding to facilitate virus release. Additionally helps virus spread through the circulation by further removing sialic acids from the cell surface. These cleavages prevent self-aggregation and ensure the efficient spread of the progeny virus from cell to cell. Otherwise, infection would be limited to one round of replication. Described as a receptor-destroying enzyme because it cleaves a terminal sialic acid from the cellular receptors. May facilitate viral invasion of the upper airways by cleaving the sialic acid moieties on the mucin of the airway epithelial cells. Likely to plays a role in the budding process through its association with lipid rafts during intracellular transport. May additionally display a raft-association independent effect on budding. Plays a role in the determination of host range restriction on replication and virulence. Sialidase activity in late endosome/lysosome traffic seems to enhance virus replication. The sequence is that of Neuraminidase from Influenza A virus (strain A/Kitakyushu/159/1993 H3N2).